Consider the following 194-residue polypeptide: CASP-like protein Ni6 (194 aa).

At 1–27 the chain is on the cytoplasmic side; the sequence is MSSMETEKGAVPTPQAPPVAPTDNKYR. The chain crosses the membrane as a helical span at residues 28–48; the sequence is VVDVILRVLLLAASIASVVLM. Residues 49 to 75 lie on the Extracellular side of the membrane; sequence VTSKQTEIIVSPFGSRPNAAKFQNSPA. A helical transmembrane segment spans residues 76–96; the sequence is FIYLVAALSVAGLYSIITALV. Residues 97-109 are Cytoplasmic-facing; the sequence is SLSYMRKPIVPPK. The helical transmembrane segment at 110 to 130 threads the bilayer; the sequence is LFWILLIHDVLLLGIVAAATG. The Extracellular segment spans residues 131–161; the sequence is TAGGVGYIGLKGNTHVRWGKIRNVYDKFCRH. A helical transmembrane segment spans residues 162–182; it reads VGASIIVSLFAAAVLVLLVFV. The Cytoplasmic segment spans residues 183–194; sequence NANSLYRRIPKY.

Belongs to the Casparian strip membrane proteins (CASP) family. In terms of assembly, homodimer and heterodimers.

It localises to the cell membrane. This chain is CASP-like protein Ni6 (Ni6), found in Beta vulgaris subsp. maritima (Sea beet).